Consider the following 347-residue polypeptide: Probable arabinogalactan endo-beta-1,4-galactanase A (347 aa).

The signal sequence occupies residues 1–16 (MLFSYLLATLPLLANA). The active-site Proton donor is the glutamate 150. The active-site Nucleophile is glutamate 260.

Belongs to the glycosyl hydrolase 53 family.

The protein localises to the secreted. It carries out the reaction The enzyme specifically hydrolyzes (1-&gt;4)-beta-D-galactosidic linkages in type I arabinogalactans.. Endogalactanase involved in the degradation of plant cell wall polysaccharides, and more particularly of hairy regions of pectin. This is Probable arabinogalactan endo-beta-1,4-galactanase A (galA) from Aspergillus oryzae (strain ATCC 42149 / RIB 40) (Yellow koji mold).